The following is a 576-amino-acid chain: Formate--tetrahydrofolate ligase (576 aa).

64–71 (TPLGEGKT) contributes to the ATP binding site.

The protein belongs to the formate--tetrahydrofolate ligase family.

It catalyses the reaction (6S)-5,6,7,8-tetrahydrofolate + formate + ATP = (6R)-10-formyltetrahydrofolate + ADP + phosphate. The protein operates within one-carbon metabolism; tetrahydrofolate interconversion. In Aeromonas hydrophila subsp. hydrophila (strain ATCC 7966 / DSM 30187 / BCRC 13018 / CCUG 14551 / JCM 1027 / KCTC 2358 / NCIMB 9240 / NCTC 8049), this protein is Formate--tetrahydrofolate ligase.